The chain runs to 277 residues: Large ribosomal subunit protein uL2 (277 aa).

Disordered regions lie at residues 37–59 and 221–265; these read KNST…GGHK and RGTA…KRTD. The segment covering 50-59 has biased composition (basic residues); sequence TTRHRGGGHK. Residues 229–241 are compositionally biased toward basic and acidic residues; it reads DHPHGGGEGRTGE.

It belongs to the universal ribosomal protein uL2 family. As to quaternary structure, part of the 50S ribosomal subunit. Forms a bridge to the 30S subunit in the 70S ribosome.

Functionally, one of the primary rRNA binding proteins. Required for association of the 30S and 50S subunits to form the 70S ribosome, for tRNA binding and peptide bond formation. It has been suggested to have peptidyltransferase activity; this is somewhat controversial. Makes several contacts with the 16S rRNA in the 70S ribosome. In Chromobacterium violaceum (strain ATCC 12472 / DSM 30191 / JCM 1249 / CCUG 213 / NBRC 12614 / NCIMB 9131 / NCTC 9757 / MK), this protein is Large ribosomal subunit protein uL2.